Consider the following 577-residue polypeptide: Urease subunit alpha (577 aa).

In terms of domain architecture, Urease spans 136–577 (GGIDCHVHFI…LPMAQRYFLF (442 aa)). Residues His-141, His-143, and Lys-224 each contribute to the Ni(2+) site. Position 224 is an N6-carboxylysine (Lys-224). A substrate-binding site is contributed by His-226. Positions 253 and 279 each coordinate Ni(2+). His-327 serves as the catalytic Proton donor. Asp-367 provides a ligand contact to Ni(2+).

It belongs to the metallo-dependent hydrolases superfamily. Urease alpha subunit family. As to quaternary structure, heterotrimer of UreA (gamma), UreB (beta) and UreC (alpha) subunits. Three heterotrimers associate to form the active enzyme. It depends on Ni cation as a cofactor. Carboxylation allows a single lysine to coordinate two nickel ions.

The protein resides in the cytoplasm. The enzyme catalyses urea + 2 H2O + H(+) = hydrogencarbonate + 2 NH4(+). Its pathway is nitrogen metabolism; urea degradation; CO(2) and NH(3) from urea (urease route): step 1/1. The protein is Urease subunit alpha of Mycobacteroides abscessus (strain ATCC 19977 / DSM 44196 / CCUG 20993 / CIP 104536 / JCM 13569 / NCTC 13031 / TMC 1543 / L948) (Mycobacterium abscessus).